The primary structure comprises 116 residues: Protein aq_1857 (116 aa).

Belongs to the HesB/IscA family.

This is Protein aq_1857 from Aquifex aeolicus (strain VF5).